Reading from the N-terminus, the 310-residue chain is MLTTDRLVNTLNLELLTGEEGLDRPIKNTDISRPGLEMAGYFSHYASDRIQLLGTTELSFYNLLPDEEKKGRMRKLCRPETPAIIVTRGLEPPEELIQASQETHTPIIVAKDATTSLMSRLTTFLEHELAKTTSLHGVLVDVYGVGVLITGDSGIGKSETALELVKRGHRLVADDNVEIKEITKDELVGKPPKLIEHLLEIRGLGIINVMTLFGAGSILTEKQIRLNINLENWNKNKLYDRVGLNEETLKILDTEITKKTIPVRPGRNVAVIIEVAAMNYRLNIMGINTAVEFNERLNEEIVRNSHKSEE.

Catalysis depends on residues His-136 and Lys-157. ATP is bound at residue 151 to 158; the sequence is GDSGIGKS. Ser-158 is a Mg(2+) binding site. Asp-175 serves as the catalytic Proton acceptor; for phosphorylation activity. Proton donor; for dephosphorylation activity. Positions 199–208 are important for the catalytic mechanism of both phosphorylation and dephosphorylation; the sequence is LEIRGLGIIN. Glu-200 is a Mg(2+) binding site. Arg-241 is an active-site residue. The important for the catalytic mechanism of dephosphorylation stretch occupies residues 262–267; the sequence is PVRPGR.

This sequence belongs to the HPrK/P family. Homohexamer. Mg(2+) is required as a cofactor.

It carries out the reaction [HPr protein]-L-serine + ATP = [HPr protein]-O-phospho-L-serine + ADP + H(+). The enzyme catalyses [HPr protein]-O-phospho-L-serine + phosphate + H(+) = [HPr protein]-L-serine + diphosphate. In terms of biological role, catalyzes the ATP- as well as the pyrophosphate-dependent phosphorylation of a specific serine residue in HPr, a phosphocarrier protein of the phosphoenolpyruvate-dependent sugar phosphotransferase system (PTS). HprK/P also catalyzes the pyrophosphate-producing, inorganic phosphate-dependent dephosphorylation (phosphorolysis) of seryl-phosphorylated HPr (P-Ser-HPr). The two antagonistic activities of HprK/P are regulated by several intracellular metabolites, which change their concentration in response to the absence or presence of rapidly metabolisable carbon sources (glucose, fructose, etc.) in the growth medium. Therefore, by controlling the phosphorylation state of HPr, HPrK/P is a sensor enzyme that plays a major role in the regulation of carbon metabolism and sugar transport: it mediates carbon catabolite repression (CCR), and regulates PTS-catalyzed carbohydrate uptake and inducer exclusion. The protein is HPr kinase/phosphorylase of Staphylococcus epidermidis (strain ATCC 35984 / DSM 28319 / BCRC 17069 / CCUG 31568 / BM 3577 / RP62A).